A 134-amino-acid chain; its full sequence is UPF0357 protein AAL017W (134 aa).

A signal peptide spans 1–23; the sequence is MFGLISLWHLFWLAVMAGILVVA.

Belongs to the UPF0357 family.

This is UPF0357 protein AAL017W from Eremothecium gossypii (strain ATCC 10895 / CBS 109.51 / FGSC 9923 / NRRL Y-1056) (Yeast).